Reading from the N-terminus, the 302-residue chain is Putative gluconeogenesis factor (302 aa).

Belongs to the gluconeogenesis factor family.

Its subcellular location is the cytoplasm. Required for morphogenesis under gluconeogenic growth conditions. The chain is Putative gluconeogenesis factor (ybhK) from Salmonella typhi.